Reading from the N-terminus, the 302-residue chain is Sulfate adenylyltransferase subunit 2 (302 aa).

This sequence belongs to the PAPS reductase family. CysD subfamily. As to quaternary structure, heterodimer composed of CysD, the smaller subunit, and CysN.

The catalysed reaction is sulfate + ATP + H(+) = adenosine 5'-phosphosulfate + diphosphate. Its pathway is sulfur metabolism; hydrogen sulfide biosynthesis; sulfite from sulfate: step 1/3. With CysN forms the ATP sulfurylase (ATPS) that catalyzes the adenylation of sulfate producing adenosine 5'-phosphosulfate (APS) and diphosphate, the first enzymatic step in sulfur assimilation pathway. APS synthesis involves the formation of a high-energy phosphoric-sulfuric acid anhydride bond driven by GTP hydrolysis by CysN coupled to ATP hydrolysis by CysD. This chain is Sulfate adenylyltransferase subunit 2, found in Klebsiella pneumoniae (strain 342).